The sequence spans 282 residues: Benzoyl-CoA reductase subunit D (282 aa).

[4Fe-4S] cluster-binding residues include Cys-130 and Cys-169.

In terms of assembly, heterotetramer composed of A, B, C, and D subunits. [4Fe-4S] cluster serves as cofactor.

The catalysed reaction is cyclohexa-1,5-diene-1-carbonyl-CoA + oxidized 2[4Fe-4S]-[ferredoxin] + 2 ADP + 2 phosphate = reduced 2[4Fe-4S]-[ferredoxin] + benzoyl-CoA + 2 ATP + 2 H2O. It carries out the reaction 3-hydroxybenzoyl-CoA + AH2 + 2 ATP + 2 H2O = 3-hydroxycyclohexa-1,5-diene-1-carbonyl-CoA + A + 2 ADP + 2 phosphate + 2 H(+). Its function is as follows. Catalyzes the anaerobic reduction of benzoyl-CoA and 3-hydroxybenzoyl-CoA to form cyclohexa-1,5-diene-1-carbonyl-CoA and 3-hydroxycyclohexa-1,5-diene-1-carbonyl-CoA, respectively. The enzyme also reduces other benzoyl-CoA analogs with small substituents at the aromatic ring. The polypeptide is Benzoyl-CoA reductase subunit D (bcrD) (Thauera aromatica).